We begin with the raw amino-acid sequence, 203 residues long: Suppressor/enhancer of lin-12 protein 9 (203 aa).

A signal peptide spans 1–18 (MNSLTWILAVLFVTPAAS). Topologically, residues 19 to 170 (YFIHVDANEE…RNINENTNSR (152 aa)) are lumenal. The GOLD domain occupies 28 to 110 (EQCFFDRLTS…PKAVMFTVEI (83 aa)). Residues 171–191 (VVMWAAFEAFVLVGMTVGQIF) traverse the membrane as a helical segment. At 192-203 (YLKRFFEVRTMV) the chain is on the cytoplasmic side.

The protein belongs to the EMP24/GP25L family.

The protein localises to the cytoplasmic vesicle membrane. It is found in the cytoplasmic vesicle. Its subcellular location is the COPI-coated vesicle membrane. The protein resides in the golgi apparatus membrane. In terms of biological role, may have a role in the negative regulation of lin-12 and glp-1 transport to the cell surface. May also have a role in a quality control mechanism for endoplasmic reticulum-Golgi transport; the budding of coatomer-coated and other species of coated vesicles, could bind cargo molecules to collect them into budding vesicles. Involved in regulating the expression of proteasomal subunits such as rpt-3 in order to confer resistance to proteasomal dysfunction. The sequence is that of Suppressor/enhancer of lin-12 protein 9 (sel-9) from Caenorhabditis elegans.